Consider the following 357-residue polypeptide: Phospho-N-acetylmuramoyl-pentapeptide-transferase (357 aa).

10 consecutive transmembrane segments (helical) span residues 4–24 (QILF…PLLI), 52–72 (TMGG…SKVI), 77–97 (PTFS…VGFL), 115–135 (AKMA…LQFA), 153–173 (FGWT…ILAM), 186–206 (LATG…VWQF), 228–248 (PLDL…FLWW), 255–275 (IFMG…LAIC), 280–300 (LLVA…VIQV), and 334–354 (FWII…AGWA).

Belongs to the glycosyltransferase 4 family. MraY subfamily. The cofactor is Mg(2+).

The protein resides in the cell membrane. It catalyses the reaction UDP-N-acetyl-alpha-D-muramoyl-L-alanyl-gamma-D-glutamyl-meso-2,6-diaminopimeloyl-D-alanyl-D-alanine + di-trans,octa-cis-undecaprenyl phosphate = di-trans,octa-cis-undecaprenyl diphospho-N-acetyl-alpha-D-muramoyl-L-alanyl-D-glutamyl-meso-2,6-diaminopimeloyl-D-alanyl-D-alanine + UMP. The protein operates within cell wall biogenesis; peptidoglycan biosynthesis. In terms of biological role, catalyzes the initial step of the lipid cycle reactions in the biosynthesis of the cell wall peptidoglycan: transfers peptidoglycan precursor phospho-MurNAc-pentapeptide from UDP-MurNAc-pentapeptide onto the lipid carrier undecaprenyl phosphate, yielding undecaprenyl-pyrophosphoryl-MurNAc-pentapeptide, known as lipid I. The protein is Phospho-N-acetylmuramoyl-pentapeptide-transferase of Streptomyces avermitilis (strain ATCC 31267 / DSM 46492 / JCM 5070 / NBRC 14893 / NCIMB 12804 / NRRL 8165 / MA-4680).